Consider the following 404-residue polypeptide: Methionine aminopeptidase 1D, mitochondrial (404 aa).

A mitochondrion-targeting transit peptide spans 1 to 58 (MNKILKNIINKSSINNVFKTSFNGGISSSSSSSSSYLNNNNNIIKSYNVQQKQQQRYY). Positions 86 to 109 (VRSQRLTKKTASPLEGMNRKERRK) are disordered. Residue histidine 232 participates in substrate binding. Aspartate 249, aspartate 260, and histidine 323 together coordinate a divalent metal cation. Residue histidine 330 coordinates substrate. Residues glutamate 355 and glutamate 389 each coordinate a divalent metal cation.

Belongs to the peptidase M24A family. Methionine aminopeptidase type 1 subfamily. Co(2+) serves as cofactor. Requires Zn(2+) as cofactor. It depends on Mn(2+) as a cofactor. Fe(2+) is required as a cofactor.

The protein localises to the mitochondrion. It catalyses the reaction Release of N-terminal amino acids, preferentially methionine, from peptides and arylamides.. Removes the N-terminal methionine from nascent proteins. The N-terminal methionine is often cleaved when the second residue in the primary sequence is small and uncharged (Met-Ala-, Cys, Gly, Pro, Ser, Thr, or Val). The protein is Methionine aminopeptidase 1D, mitochondrial (metap1d) of Dictyostelium discoideum (Social amoeba).